We begin with the raw amino-acid sequence, 448 residues long: Beta-glucosidase A (448 aa).

E166 serves as the catalytic Proton donor. The active-site Nucleophile is E352.

It belongs to the glycosyl hydrolase 1 family. In terms of assembly, homooctamer.

The catalysed reaction is Hydrolysis of terminal, non-reducing beta-D-glucosyl residues with release of beta-D-glucose.. BglA is intracellular and cleaves cellobiose probably through inorganic phosphate mediated hydrolysis. This Paenibacillus polymyxa (Bacillus polymyxa) protein is Beta-glucosidase A (bglA).